Consider the following 676-residue polypeptide: Head-specific guanylate cyclase (676 aa).

The 128-residue stretch at 466 to 593 (TILFSDIVGF…HSVTIANKFE (128 aa)) folds into the Guanylate cyclase domain.

It belongs to the adenylyl cyclase class-4/guanylyl cyclase family. Heterodimer. As to expression, head, where it is preferentially expressed in the CNS and the retina. Not found in bodies.

It is found in the cytoplasm. It carries out the reaction GTP = 3',5'-cyclic GMP + diphosphate. In terms of biological role, may have a role in phototransduction. Catalyzes the conversion of GTP to cGMP, a common second messenger that is utilized in a wide variety of cells and signal transduction pathways. A second subunit is required for enzyme activity. This chain is Head-specific guanylate cyclase (Gycalpha99B), found in Drosophila melanogaster (Fruit fly).